Reading from the N-terminus, the 220-residue chain is Aspartic protease inhibitor 5 (220 aa).

The signal sequence occupies residues 1–23 (MMKCLFLLCLCLLPIVVFSSTFT). The propeptide occupies 24-32 (SQNLIDLPS). A Vacuolar targeting signal motif is present at residues 26–31 (NLIDLP). N51 carries N-linked (GlcNAc...) asparagine glycosylation. Cystine bridges form between C80–C125 and C174–C185.

The protein belongs to the protease inhibitor I3 (leguminous Kunitz-type inhibitor) family.

It localises to the vacuole. Its function is as follows. Inhibitor of cathepsin D (aspartic protease). May also inhibit trypsin and chymotrypsin (serine proteases). Protects the plant by inhibiting proteases of invading organisms. This Solanum tuberosum (Potato) protein is Aspartic protease inhibitor 5.